The sequence spans 181 residues: Mitochondrial pyruvate carrier-like protein (181 aa).

2 consecutive transmembrane segments (helical) span residues 23–42 (YLAS…PLAA) and 52–74 (IISG…FAYR). A disordered region spans residues 125-154 (TGSVDSSATSTGSVDSSATSTGSVDSSAAT).

The protein belongs to the mitochondrial pyruvate carrier (MPC) (TC 2.A.105) family.

The protein localises to the mitochondrion inner membrane. Its function is as follows. May mediate the uptake of pyruvate into mitochondria. This chain is Mitochondrial pyruvate carrier-like protein, found in Bos taurus (Bovine).